The primary structure comprises 102 residues: Small ribosomal subunit protein uS10 (102 aa).

This sequence belongs to the universal ribosomal protein uS10 family. Part of the 30S ribosomal subunit.

Involved in the binding of tRNA to the ribosomes. This is Small ribosomal subunit protein uS10 from Desulforamulus reducens (strain ATCC BAA-1160 / DSM 100696 / MI-1) (Desulfotomaculum reducens).